The following is a 174-amino-acid chain: Nicotinamide-nucleotide adenylyltransferase (174 aa).

It belongs to the archaeal NMN adenylyltransferase family.

It localises to the cytoplasm. The enzyme catalyses beta-nicotinamide D-ribonucleotide + ATP + H(+) = diphosphate + NAD(+). Its pathway is cofactor biosynthesis; NAD(+) biosynthesis; NAD(+) from nicotinamide D-ribonucleotide: step 1/1. This chain is Nicotinamide-nucleotide adenylyltransferase, found in Methanospirillum hungatei JF-1 (strain ATCC 27890 / DSM 864 / NBRC 100397 / JF-1).